The following is a 218-amino-acid chain: Large ribosomal subunit protein uL3 (218 aa).

Residues 126–163 (HGFSRGPMTHGSKNHRQPGSIGAGTTPGRIYPGKRMSG) form a disordered region.

It belongs to the universal ribosomal protein uL3 family. As to quaternary structure, part of the 50S ribosomal subunit. Forms a cluster with proteins L14 and L19.

Functionally, one of the primary rRNA binding proteins, it binds directly near the 3'-end of the 23S rRNA, where it nucleates assembly of the 50S subunit. The polypeptide is Large ribosomal subunit protein uL3 (Synechococcus sp. (strain CC9311)).